Here is a 278-residue protein sequence, read N- to C-terminus: Large ribosomal subunit protein uL2 (278 aa).

Residues His201–Lys278 are disordered. Over residues Gly210–Val221 the composition is skewed to basic residues.

This sequence belongs to the universal ribosomal protein uL2 family. As to quaternary structure, part of the 50S ribosomal subunit. Forms a bridge to the 30S subunit in the 70S ribosome.

Functionally, one of the primary rRNA binding proteins. Required for association of the 30S and 50S subunits to form the 70S ribosome, for tRNA binding and peptide bond formation. It has been suggested to have peptidyltransferase activity; this is somewhat controversial. Makes several contacts with the 16S rRNA in the 70S ribosome. This Allorhizobium ampelinum (strain ATCC BAA-846 / DSM 112012 / S4) (Agrobacterium vitis (strain S4)) protein is Large ribosomal subunit protein uL2.